Reading from the N-terminus, the 97-residue chain is Small ribosomal subunit protein bS6 (97 aa).

Belongs to the bacterial ribosomal protein bS6 family.

In terms of biological role, binds together with bS18 to 16S ribosomal RNA. The protein is Small ribosomal subunit protein bS6 of Dictyoglomus turgidum (strain DSM 6724 / Z-1310).